We begin with the raw amino-acid sequence, 1134 residues long: DENN domain-containing protein 2B (1134 aa).

The span at 1 to 13 (MTMTANKNSSITH) shows a compositional bias: polar residues. The segment at 1–90 (MTMTANKNSS…DPSPETSPPI (90 aa)) is disordered. Phosphoserine is present on residues S30 and S32. The segment covering 32–43 (SPPPVLYPPRSP) has biased composition (pro residues). T228 is subject to Phosphothreonine. S230 is subject to Phosphoserine. Disordered regions lie at residues 233–273 (SYPE…GIRK) and 289–571 (LKEQ…KRHS). Residues 249 to 259 (SLYRLEKRPGR) show a composition bias toward basic and acidic residues. Positions 315 to 348 (GTLGTLEEPTGTASVSPSSRAGGVAGVAGEAGPP) are enriched in low complexity. Residue T361 is modified to Phosphothreonine. S365 carries the phosphoserine modification. Over residues 370-385 (LLPPKSSPDPAVNPVP) the composition is skewed to pro residues. Positions 389 to 399 (RTFEYEADKNP) are enriched in basic and acidic residues. The span at 406–428 (GLPPSPTPAAPPPLPSTPAPPVT) shows a compositional bias: pro residues. A compositionally biased stretch (basic residues) spans 429 to 443 (RRPKKDMRGHRKSQN). The segment covering 453-478 (SSLQSLYPSSPTENGTESQPKFGSKS) has biased composition (polar residues). T479 bears the Phosphothreonine mark. Polar residues-rich tracts occupy residues 511 to 521 (KSQQLSENSLD) and 542 to 555 (SLKS…SGNW). S542 bears the Phosphoserine mark. Basic residues predominate over residues 559–570 (KSHRLPRLPKRH). S571 and S619 each carry phosphoserine. The interval 633–658 (LSMSSLETASLRDENSESESDSDDRF) is disordered. Residues 695–843 (EYFVVVSLKK…PFPAPGKTIK (149 aa)) enclose the uDENN domain. Residues 865-998 (RLEHVDFECL…LQAALEQALE (134 aa)) form the cDENN domain. One can recognise a dDENN domain in the interval 1000 to 1093 (KSELISQDSD…QDRELRKCRA (94 aa)).

Interacts with ITSN1 and GRB2. Isoform 1 interacts with the SH3 domain of ABL1. Post-translationally, phosphorylated. Phosphorylation decreases ITSN1 binding.

It is found in the cytoplasm. The protein resides in the cell cortex. Its subcellular location is the cell membrane. It localises to the recycling endosome. May be involved in cytoskeletal organization and tumorogenicity. Seems to be involved in a signaling transduction pathway leading to activation of MAPK1/ERK2. Plays a role in EGFR trafficking from recycling endosomes back to the cell membrane. Functionally, guanine nucleotide exchange factor (GEF) which may activate RAB9A and RAB9B. Promotes the exchange of GDP to GTP, converting inactive GDP-bound Rab proteins into their active GTP-bound form. Its function is as follows. May block ERK2 activation stimulated by ABL1. May alter cell morphology and cell growth. This Mus musculus (Mouse) protein is DENN domain-containing protein 2B (Dennd2b).